An 899-amino-acid polypeptide reads, in one-letter code: Tubulin glycylase 3F (899 aa).

One can recognise a TTL domain in the interval 471–835 (FKDVIQIIKN…TEYYQIQNWK (365 aa)). ATP-binding positions include 642 to 645 (QKYI), K663, and D665.

It localises to the cytoplasm. It is found in the cytoskeleton. The protein resides in the cilium basal body. In terms of biological role, probable glycylase which modifies tubulin, generating side chains of glycine on the gamma-carboxyl groups of specific glutamate residues within the C-terminal tail of tubulin. The protein is Tubulin glycylase 3F (TTLL3F) of Tetrahymena thermophila (strain SB210).